A 280-amino-acid chain; its full sequence is Putative protein-tyrosine sulfotransferase (280 aa).

Arginine 16–threonine 20 serves as a coordination point for 3'-phosphoadenylyl sulfate. Cysteines 34 and 89 form a disulfide. The active-site Proton donor/acceptor is glutamate 37. Asparagine 57 carries an N-linked (GlcNAc...) asparagine glycan. 3 residues coordinate 3'-phosphoadenylyl sulfate: arginine 116, serine 124, and arginine 128. Asparagine 136 carries N-linked (GlcNAc...) asparagine glycosylation. Residues cysteine 158 and cysteine 165 are joined by a disulfide bond. 3'-phosphoadenylyl sulfate-binding positions include tyrosine 170 and serine 215–asparagine 224.

The protein belongs to the protein sulfotransferase family.

It catalyses the reaction L-tyrosyl-[protein] + 3'-phosphoadenylyl sulfate = O-sulfo-L-tyrosine-[protein] + adenosine 3',5'-bisphosphate + H(+). In terms of biological role, catalyzes the O-sulfation of tyrosine residues within acidic motifs of polypeptides, using 3'-phosphoadenylyl sulfate (PAPS) as cosubstrate. In Caenorhabditis briggsae, this protein is Putative protein-tyrosine sulfotransferase.